A 137-amino-acid chain; its full sequence is Large ribosomal subunit protein uL14 (137 aa).

It belongs to the universal ribosomal protein uL14 family. Part of the 50S ribosomal subunit. Forms a cluster with proteins L3 and L24e, part of which may contact the 16S rRNA in 2 intersubunit bridges.

Binds to 23S rRNA. Forms part of two intersubunit bridges in the 70S ribosome. This Ignicoccus hospitalis (strain KIN4/I / DSM 18386 / JCM 14125) protein is Large ribosomal subunit protein uL14.